The sequence spans 282 residues: PTS system sorbose-specific EIID component (282 aa).

Positions 13–281 (TKITKGDMFK…GIVGYWLGIL (269 aa)) constitute a PTS EIID domain. Helical transmembrane passes span 135–155 (LGAS…FVAF), 197–217 (GLFI…PLVV), 234–254 (ILDQ…CMYL), and 261–281 (PILL…LGIL).

It localises to the cell membrane. Its function is as follows. The phosphoenolpyruvate-dependent sugar phosphotransferase system (PTS), a major carbohydrate active transport system, catalyzes the phosphorylation of incoming sugar substrates concomitant with their translocation across the cell membrane. The enzyme II SorABCD PTS system is involved in L-sorbose transport. In Lacticaseibacillus casei (Lactobacillus casei), this protein is PTS system sorbose-specific EIID component.